Here is a 436-residue protein sequence, read N- to C-terminus: MFESKINPLWQSFILAVQEEVKPALGCTEPISLALAAAAAAAELDGTVERIDAWVSPNLMKNGMGVTVPGTGMVGLPIAAALGALGGDAKAGLEVLKDASAKAVADAKAMLAAGHVAVMLQEPCNDILFSRAKVYSGDSWACVTIVGDHTNIVRIETNKGVVFTQADNAQEEEKNSPLGVLSHTSLEEILAFVNAVPFDAIRFILDAARLNGALSQEGLRGSWGLHIGSTLAKQCDRGLLAKDLSTAILIRTSAASDARMGGATLPAMSNSGSGNQGITATVPVMVVAEHVGADDERLARALMLSHLSAIYIHHQLPRLSALCAATTAAMGAAAGMAWLIDGRYDTIAMAISSMIGDVSGMICDGASNSCAMKVSTSASAAWKAVLMALDDTAVTGNEGIVAHNVEQSIANLCSLACRSMQQTDKQIIEIMASKAH.

It belongs to the UPF0597 family.

In Salmonella dublin (strain CT_02021853), this protein is UPF0597 protein YhaM.